A 134-amino-acid polypeptide reads, in one-letter code: Small ribosomal subunit protein uS11 (134 aa).

This sequence belongs to the universal ribosomal protein uS11 family. As to quaternary structure, part of the 30S ribosomal subunit. Interacts with proteins S7 and S18. Binds to IF-3.

Located on the platform of the 30S subunit, it bridges several disparate RNA helices of the 16S rRNA. Forms part of the Shine-Dalgarno cleft in the 70S ribosome. This Leptothrix cholodnii (strain ATCC 51168 / LMG 8142 / SP-6) (Leptothrix discophora (strain SP-6)) protein is Small ribosomal subunit protein uS11.